The chain runs to 195 residues: Cysteine/O-acetylserine efflux protein (195 aa).

Residues 1-9 (MTPMLLSAF) are Periplasmic-facing. The helical transmembrane segment at 10 to 32 (WTYTLITALTPGPNNILALSAAT) threads the bilayer. The Cytoplasmic portion of the chain corresponds to 33–46 (AHGFRQSIRVLAGM). Residues 47-67 (SLGFLVVMLLCAGIAFSLAVI) traverse the membrane as a helical segment. At 68–69 (DP) the chain is on the periplasmic side. The chain crosses the membrane as a helical span at residues 70-90 (AIIHLLSWVGAAYILWLAWKI). At 91-104 (ATSPAADEKVRPKP) the chain is on the cytoplasmic side. Residues 105 to 125 (VGFWVSFGLQFVNVKIILYGI) form a helical membrane-spanning segment. At 126–141 (TALSTFVLPQTQALNW) the chain is on the periplasmic side. Residues 142–162 (VIGVSILLALIGTFGNVCWAL) traverse the membrane as a helical segment. At 163 to 176 (AGHLFQRAFRHYGR) the chain is on the cytoplasmic side. A helical membrane pass occupies residues 177–194 (QLNIILALLLVYCAVRIF). Position 195 (Tyr195) is a topological domain, periplasmic.

The protein belongs to the Rht family.

The protein resides in the cell inner membrane. The catalysed reaction is O-acetyl-L-serine(in) = O-acetyl-L-serine(out). It carries out the reaction L-cysteine(in) = L-cysteine(out). Functionally, exporter of O-acetylserine (OAS) and cysteine. The protein is Cysteine/O-acetylserine efflux protein (eamB) of Salmonella paratyphi A (strain ATCC 9150 / SARB42).